A 183-amino-acid polypeptide reads, in one-letter code: uncharacterized protein (183 aa).

A signal peptide spans 1–23; sequence MSAFKKSLLVAGVAMILSNNVFA. A disulfide bond links C41 and C80.

Belongs to the fimbrial protein family.

The protein resides in the fimbrium. This is an uncharacterized protein from Escherichia coli (strain K12).